The primary structure comprises 215 residues: MNQTLLEQFGNARERVEKGLQALRDGQGVLVADDENRENEGDLIFSAESLTEAQMAMLIRECSGIVCLCMPDEKIRSLELPMMVEDNSSRYGTAFTVSIEAAQGVTTGVSAKDRVTTVKTAAADGAKPADLSKPGHVFPLRARPGGVLERRGHTEATVDMMRLAGLKNPCGVLCELTNPDGTMARLPQLADFAKKHGMVLLTVEDLAAYRESQEN.

D-ribulose 5-phosphate-binding positions include 37–38, D42, 150–154, and E175; these read RE and RRGHT. Position 38 (E38) interacts with Mg(2+). H153 lines the Mg(2+) pocket.

The protein belongs to the DHBP synthase family. Homodimer. It depends on Mg(2+) as a cofactor. Requires Mn(2+) as cofactor.

It carries out the reaction D-ribulose 5-phosphate = (2S)-2-hydroxy-3-oxobutyl phosphate + formate + H(+). It participates in cofactor biosynthesis; riboflavin biosynthesis; 2-hydroxy-3-oxobutyl phosphate from D-ribulose 5-phosphate: step 1/1. Its function is as follows. Catalyzes the conversion of D-ribulose 5-phosphate to formate and 3,4-dihydroxy-2-butanone 4-phosphate. The polypeptide is 3,4-dihydroxy-2-butanone 4-phosphate synthase (Desulfatibacillum aliphaticivorans).